The sequence spans 166 residues: Early E3 18.5 kDa glycoprotein (166 aa).

The signal sequence occupies residues 1-19; that stretch reads MGPILVLLVLLSLLEPGSA. Residues 20–131 are Lumenal-facing; that stretch reads NYDPCLDFDP…SKDNIVTFSI (112 aa). N-linked (GlcNAc...) asparagine; by host glycosylation occurs at N31. Intrachain disulfides connect C32/C50 and C44/C106. N63, N67, and N97 each carry an N-linked (GlcNAc...) asparagine; by host glycan. Residues 132 to 152 form a helical membrane-spanning segment; sequence AYCLCACLLTALLCVCIHLLV. The Cytoplasmic portion of the chain corresponds to 153–166; it reads TTRIKNANNKEKMP. A Di-lysine motif motif is present at residues 162–166; sequence KEKMP.

The protein belongs to the adenoviridae E19 family. Both disulfide bonds are absolutely critical for the interaction with MHC antigens. In terms of processing, N-glycosylated; high-mannose.

Its subcellular location is the host endoplasmic reticulum membrane. Its function is as follows. Binds and retains class I heavy chains in the endoplasmic reticulum during the early period of virus infection, thereby impairing their transport to the cell surface. Also delays the expression of class I alleles that it cannot affect by direct retention. Binds transporters associated with antigen processing (TAP) and acts as a tapasin inhibitor, preventing class I/TAP association. In consequence, infected cells are masked for immune recognition by cytotoxic T-lymphocytes. The protein is Early E3 18.5 kDa glycoprotein of Human adenovirus B serotype 11 (strain Slobiski) (HAdV-11).